The primary structure comprises 85 residues: Large ribosomal subunit protein bL27 (85 aa).

The disordered stretch occupies residues 1–20 (MAHKKAGGSTRNGRDSEAKR).

It belongs to the bacterial ribosomal protein bL27 family.

The chain is Large ribosomal subunit protein bL27 from Klebsiella pneumoniae (strain 342).